The primary structure comprises 399 residues: Acetate kinase (399 aa).

Residue Asn7 coordinates Mg(2+). Position 14 (Lys14) interacts with ATP. Residue Arg91 participates in substrate binding. Asp148 functions as the Proton donor/acceptor in the catalytic mechanism. ATP contacts are provided by residues 208–212 (HLGNG) and 283–285 (DFR). Position 384 (Glu384) interacts with Mg(2+).

Belongs to the acetokinase family. As to quaternary structure, homodimer. Mg(2+) is required as a cofactor. The cofactor is Mn(2+).

It localises to the cytoplasm. It carries out the reaction acetate + ATP = acetyl phosphate + ADP. It functions in the pathway metabolic intermediate biosynthesis; acetyl-CoA biosynthesis; acetyl-CoA from acetate: step 1/2. Its function is as follows. Catalyzes the formation of acetyl phosphate from acetate and ATP. Can also catalyze the reverse reaction. In Dictyoglomus thermophilum (strain ATCC 35947 / DSM 3960 / H-6-12), this protein is Acetate kinase.